The sequence spans 555 residues: Neurofilament light polypeptide (555 aa).

Residue Ser2 is modified to N-acetylserine. The interval Ser2–Gln93 is head. An Asymmetric dimethylarginine; alternate modification is found at Arg23. At Arg23 the chain carries Omega-N-methylarginine; alternate. Arg30 carries the omega-N-methylarginine modification. Tyr43 is subject to Phosphotyrosine. Residues Ser56, Ser67, and Ser103 each carry the phosphoserine modification. Positions Glu90–Leu401 constitute an IF rod domain. The segment at Leu94–Leu125 is coil 1A. Positions Arg126–Leu138 are linker 1. Positions Tyr139 to Leu234 are coil 1B. Residues Gln235 to Pro253 are linker 12. The coil 2A stretch occupies residues Asp254–Lys272. The segment at Asn273–Phe281 is linker 2. The interval Lys282–Glu397 is coil 2B. The interval Glu398–Tyr444 is tail, subdomain A. The tract at residues Glu398 to Asp555 is tail. The tract at residues Thr445 to Asp555 is tail, subdomain B (acidic). The tract at residues Lys463–Asp555 is disordered. Positions Pro472–Lys540 are enriched in acidic residues. Ser473 is modified (phosphoserine). Position 532 is a phosphothreonine (Thr532). Positions Lys541 to Asp555 are enriched in basic and acidic residues.

This sequence belongs to the intermediate filament family. In terms of assembly, forms homodimers (in vitro). Forms heterodimers with NEFH or NEFM; which can further hetero-oligomerize (in vitro). Forms heterodimers with INA (in vitro). Interacts with ARHGEF28. Interacts with TRIM2. O-glycosylated. Post-translationally, phosphorylated in the head and rod regions by the PKC kinase PKN1, leading to the inhibition of polymerization. In terms of processing, ubiquitinated in the presence of TRIM2 and UBE2D1.

Its subcellular location is the cell projection. The protein resides in the axon. The protein localises to the cytoplasm. It localises to the cytoskeleton. In terms of biological role, neurofilaments usually contain three intermediate filament proteins: NEFL, NEFM, and NEFH which are involved in the maintenance of neuronal caliber. May additionally cooperate with the neuronal intermediate filament proteins PRPH and INA to form neuronal filamentous networks. The polypeptide is Neurofilament light polypeptide (NEFL) (Bos taurus (Bovine)).